The sequence spans 455 residues: Phosphoglucosamine mutase (455 aa).

Ser-107 acts as the Phosphoserine intermediate in catalysis. Residues Ser-107, Asp-247, Asp-249, and Asp-251 each coordinate Mg(2+). Ser-107 carries the phosphoserine modification.

Belongs to the phosphohexose mutase family. It depends on Mg(2+) as a cofactor. In terms of processing, activated by phosphorylation.

It catalyses the reaction alpha-D-glucosamine 1-phosphate = D-glucosamine 6-phosphate. Catalyzes the conversion of glucosamine-6-phosphate to glucosamine-1-phosphate. In Leuconostoc citreum (strain KM20), this protein is Phosphoglucosamine mutase.